The following is a 213-amino-acid chain: Eukaryotic translation initiation factor 4E (213 aa).

Phosphoserine; by CK2 occurs at positions 2 and 15. Phosphothreonine is present on Thr-22. Ser-28 and Ser-30 each carry phosphoserine. A Glycyl lysine isopeptide (Lys-Gly) (interchain with G-Cter in ubiquitin) cross-link involves residue Lys-114.

This sequence belongs to the eukaryotic initiation factor 4E family. Component of the eIF4F complex, which composition varies with external and internal environmental conditions. It is composed of at least eIF4A (TIF1/TIF2), eIF4E (TIF45) and eIF4G (TIF4631 or TIF4632). Interacts with PAT1 in a RNA-dependent manner. eIF4E is also known to interact with other partners.

Its subcellular location is the cytoplasm. It is found in the nucleus. Recognizes and binds the 7-methylguanosine (m7G)-containing mRNA cap during an early step in the initiation of protein synthesis and facilitates ribosome binding by inducing the unwinding of the mRNAs secondary structures. The chain is Eukaryotic translation initiation factor 4E (CDC33) from Saccharomyces cerevisiae (strain ATCC 204508 / S288c) (Baker's yeast).